Consider the following 393-residue polypeptide: Pigment production hydroxylase (393 aa).

Involved in pigment production acting as a hydroxylase that transforms indole to indoxyl, resulting in the formation of indigo. In Rhodococcus erythropolis (Arthrobacter picolinophilus), this protein is Pigment production hydroxylase.